A 115-amino-acid chain; its full sequence is ER exit protein (115 aa).

Belongs to the STEEP1 family.

In terms of biological role, may stimulate membrane curvature formation and subsequent endoplasmic reticulum exit site (ERES) establishment. This chain is ER exit protein, found in Schizosaccharomyces pombe (strain 972 / ATCC 24843) (Fission yeast).